A 601-amino-acid polypeptide reads, in one-letter code: Probable serine/threonine-protein kinase WNK3 (601 aa).

One can recognise a Protein kinase domain in the interval 34-291 (GRFNEILGKG…ARELLDDPFL (258 aa)). ATP contacts are provided by residues 114–117 (TELF) and lysine 164. The Proton acceptor role is filled by aspartate 181. Disordered stretches follow at residues 470–498 (GWRP…PGGA) and 551–601 (ADDD…SEQP). Residues 477-493 (TDDDDDDDLVGGGDDPD) are compositionally biased toward acidic residues. A compositionally biased stretch (polar residues) spans 560-571 (LQGSSSDTGGSN). Residues 572-583 (HEQHAMGKDKEV) are compositionally biased toward basic and acidic residues.

It belongs to the protein kinase superfamily. Ser/Thr protein kinase family. WNK subfamily.

The enzyme catalyses L-seryl-[protein] + ATP = O-phospho-L-seryl-[protein] + ADP + H(+). It carries out the reaction L-threonyl-[protein] + ATP = O-phospho-L-threonyl-[protein] + ADP + H(+). This chain is Probable serine/threonine-protein kinase WNK3 (WNK3), found in Oryza sativa subsp. japonica (Rice).